The sequence spans 348 residues: Uroporphyrinogen decarboxylase (348 aa).

Substrate-binding positions include 27 to 31, Phe46, Asp76, Tyr152, Ser207, and His320; that span reads RQAGR.

This sequence belongs to the uroporphyrinogen decarboxylase family. In terms of assembly, homodimer.

It is found in the cytoplasm. It carries out the reaction uroporphyrinogen III + 4 H(+) = coproporphyrinogen III + 4 CO2. Its pathway is porphyrin-containing compound metabolism; protoporphyrin-IX biosynthesis; coproporphyrinogen-III from 5-aminolevulinate: step 4/4. In terms of biological role, catalyzes the decarboxylation of four acetate groups of uroporphyrinogen-III to yield coproporphyrinogen-III. This Bacillus cereus (strain AH820) protein is Uroporphyrinogen decarboxylase.